The chain runs to 312 residues: Porphobilinogen deaminase (312 aa).

C241 bears the S-(dipyrrolylmethanemethyl)cysteine mark.

It belongs to the HMBS family. Monomer. Dipyrromethane serves as cofactor.

The catalysed reaction is 4 porphobilinogen + H2O = hydroxymethylbilane + 4 NH4(+). It participates in porphyrin-containing compound metabolism; protoporphyrin-IX biosynthesis; coproporphyrinogen-III from 5-aminolevulinate: step 2/4. Its function is as follows. Tetrapolymerization of the monopyrrole PBG into the hydroxymethylbilane pre-uroporphyrinogen in several discrete steps. This chain is Porphobilinogen deaminase, found in Trichlorobacter lovleyi (strain ATCC BAA-1151 / DSM 17278 / SZ) (Geobacter lovleyi).